A 101-amino-acid polypeptide reads, in one-letter code: NAD(P)H-quinone oxidoreductase subunit 4L, chloroplastic (101 aa).

3 consecutive transmembrane segments (helical) span residues 2–22 (MFEYALVLSSYLFSMGIYGLI), 32–52 (MCLELILNAVNMNLVTFSDLF), and 61–81 (IFSIFVIAIAAAEAAIGPAIV).

Belongs to the complex I subunit 4L family. NDH is composed of at least 16 different subunits, 5 of which are encoded in the nucleus.

It is found in the plastid. The protein resides in the chloroplast thylakoid membrane. It catalyses the reaction a plastoquinone + NADH + (n+1) H(+)(in) = a plastoquinol + NAD(+) + n H(+)(out). The enzyme catalyses a plastoquinone + NADPH + (n+1) H(+)(in) = a plastoquinol + NADP(+) + n H(+)(out). Its function is as follows. NDH shuttles electrons from NAD(P)H:plastoquinone, via FMN and iron-sulfur (Fe-S) centers, to quinones in the photosynthetic chain and possibly in a chloroplast respiratory chain. The immediate electron acceptor for the enzyme in this species is believed to be plastoquinone. Couples the redox reaction to proton translocation, and thus conserves the redox energy in a proton gradient. In Amborella trichopoda, this protein is NAD(P)H-quinone oxidoreductase subunit 4L, chloroplastic.